The chain runs to 160 residues: Cyclic pyranopterin monophosphate synthase (160 aa).

Residues 75–77 and 113–114 each bind substrate; these read LCH and ME. Asp-128 is an active-site residue.

The protein belongs to the MoaC family. As to quaternary structure, homohexamer; trimer of dimers.

The catalysed reaction is (8S)-3',8-cyclo-7,8-dihydroguanosine 5'-triphosphate = cyclic pyranopterin phosphate + diphosphate. The protein operates within cofactor biosynthesis; molybdopterin biosynthesis. Catalyzes the conversion of (8S)-3',8-cyclo-7,8-dihydroguanosine 5'-triphosphate to cyclic pyranopterin monophosphate (cPMP). The protein is Cyclic pyranopterin monophosphate synthase of Sodalis glossinidius (strain morsitans).